We begin with the raw amino-acid sequence, 160 residues long: ATP synthase subunit delta, mitochondrial (160 aa).

The transit peptide at 1-22 directs the protein to the mitochondrion; the sequence is MFRQSLRSIARTRTGTIGVRTY.

F-type ATP synthases have 2 components, the catalytic core F(1) and the membrane-embedded component F(0), linked together by a central stalk and a peripheral stalk. The central stalk, also called rotor shaft, is often seen as part of F(1). The peripheral stalk is seen as part of F(0). F(0) contains the membrane channel next to the rotor. F-type ATP synthases form dimers but each monomer functions independently in ATP generation. The dimer consists of 18 different polypeptides: ATP1 (subunit alpha, part of F(1), 3 molecules per monomer), ATP2 (subunit beta, part of F(1), 3 molecules per monomer), ATP3 (subunit gamma, part of the central stalk), ATP4 (subunit b, part of the peripheral stalk), ATP5/OSCP (subunit 5/OSCP, part of the peripheral stalk), ATP6 (subunit a, part of the peripheral stalk), ATP7 (subunit d, part of the peripheral stalk), ATP8 (subunit 8, part of the peripheral stalk), OLI1 (subunit c, part of the rotor, 10 molecules per monomer), ATP14 (subunit h, part of the peripheral stalk), ATP15 (subunit epsilon, part of the central stalk), ATP16 (subunit delta, part of the central stalk), ATP17 (subunit f, part of the peripheral stalk), ATP18 (subunit i/j, part of the peripheral stalk). Dimer-specific subunits are ATP19 (subunit k, at interface between monomers), ATP20 (subunit g, at interface between monomers), TIM11 (subunit e, at interface between monomers). Also contains subunit L.

The protein localises to the mitochondrion inner membrane. Functionally, mitochondrial membrane ATP synthase (F(1)F(0) ATP synthase or Complex V) produces ATP from ADP in the presence of a proton gradient across the membrane which is generated by electron transport complexes of the respiratory chain. F-type ATP synthases consist of two structural domains, F(1) - containing the extramembraneous catalytic core, and F(0) - containing the membrane proton channel, linked together by a central stalk and a peripheral stalk. During catalysis, ATP synthesis in the catalytic domain of F(1) is coupled via a rotary mechanism of the central stalk subunits to proton translocation. Part of the complex F(1) domain and the central stalk which is part of the complex rotary element. Rotation of the central stalk against the surrounding alpha/ATP1(3)beta/ATP2(3) subunits leads to hydrolysis of ATP in three separate catalytic sites on the beta/ATP2 subunits. In Pichia angusta (Yeast), this protein is ATP synthase subunit delta, mitochondrial.